We begin with the raw amino-acid sequence, 337 residues long: Monoacylglycerol lipase ABHD6 (337 aa).

Residues 1 to 19 (MDLDVVNMFVIAGGTLALP) are Extracellular-facing. A helical; Signal-anchor for type II membrane protein membrane pass occupies residues 20 to 42 (ILAFVASFLLWPSALIRIYYWYW). The Cytoplasmic portion of the chain corresponds to 43 to 337 (RRTLGMQVRY…HSTDNSKKLD (295 aa)). Positions 72–313 (PSILMLHGFS…CGHSVVMERP (242 aa)) constitute an AB hydrolase-1 domain. Residue S148 is the Nucleophile of the active site. Active-site charge relay system residues include D278 and H306.

Belongs to the AB hydrolase superfamily.

The protein resides in the late endosome membrane. The protein localises to the lysosome membrane. It is found in the mitochondrion membrane. It carries out the reaction Hydrolyzes glycerol monoesters of long-chain fatty acids.. The enzyme catalyses 1-octanoylglycerol + H2O = octanoate + glycerol + H(+). It catalyses the reaction 1-decanoylglycerol + H2O = decanoate + glycerol + H(+). The catalysed reaction is 1-dodecanoylglycerol + H2O = dodecanoate + glycerol + H(+). It carries out the reaction 1-tetradecanoylglycerol + H2O = tetradecanoate + glycerol + H(+). The enzyme catalyses 2-hexadecanoylglycerol + H2O = glycerol + hexadecanoate + H(+). It catalyses the reaction 2-(9Z-octadecenoyl)-glycerol + H2O = glycerol + (9Z)-octadecenoate + H(+). The catalysed reaction is 1-(9Z-octadecenoyl)-glycerol + H2O = glycerol + (9Z)-octadecenoate + H(+). It carries out the reaction 2-(9Z,12Z-octadecadienoyl)-glycerol + H2O = (9Z,12Z)-octadecadienoate + glycerol + H(+). The enzyme catalyses 2-(5Z,8Z,11Z,14Z-eicosatetraenoyl)-glycerol + H2O = glycerol + (5Z,8Z,11Z,14Z)-eicosatetraenoate + H(+). It catalyses the reaction 1-(5Z,8Z,11Z,14Z-eicosatetraenoyl)-glycerol + H2O = glycerol + (5Z,8Z,11Z,14Z)-eicosatetraenoate + H(+). The catalysed reaction is 1-(9Z,12Z-octadecadienoyl)-glycerol + H2O = (9Z,12Z)-octadecadienoate + glycerol + H(+). It carries out the reaction 3-(9Z-octadecenoyl)-sn-glycero-1-phospho-(3'-(9Z-octadecenoyl)-1'-sn-glycerol) + H2O = 3-(9Z-octadecenoyl)-sn-glycero-1-phospho-(1'-sn-glycerol) + (9Z)-octadecenoate + H(+). The enzyme catalyses (S,S)-2-(9Z-octadecenoyl)-sn-glycero-1-phospho-(2'-(9Z-octadecenoyl)-1'-sn-glycerol) + H2O = (S,S)-2-(9Z-octadecenoyl)-sn-glycero-1-phospho-(1'-sn-glycerol) + (9Z)-octadecenoate + H(+). It catalyses the reaction (R,R)-2-(9Z-octadecenoyl)-sn-glycero-3-phospho-(2'-(9Z-octadecenoyl)-3'-sn-glycerol) + H2O = (R,R)-2-(9Z-octadecenoyl)-sn-glycero-3-phospho-(3'-sn-glycerol) + (9Z)-octadecenoate + H(+). Lipase that preferentially hydrolysis medium-chain saturated monoacylglycerols including 2-arachidonoylglycerol. Through 2-arachidonoylglycerol degradation may regulate endocannabinoid signaling pathways. Also has a lysophosphatidyl lipase activity with a preference for lysophosphatidylglycerol among other lysophospholipids. Also able to degrade bis(monoacylglycero)phosphate (BMP) and constitutes the major enzyme for BMP catabolism. BMP, also known as lysobisphosphatidic acid, is enriched in late endosomes and lysosomes and plays a key role in the formation of intraluminal vesicles and in lipid sorting. This chain is Monoacylglycerol lipase ABHD6, found in Bos taurus (Bovine).